The chain runs to 105 residues: Cyclotide vibi-J (105 aa).

A signal peptide spans 1–9 (AAFALPALA). A propeptide spanning residues 10–71 (TSFEKDFITH…KSSNSINALG (62 aa)) is cleaved from the precursor. A cross-link (cyclopeptide (Gly-Asn)) is located at residues 72–102 (GTFPCGESCVWIPCISKVIGCACKSKVCYKN). Disulfide bonds link Cys-76-Cys-92, Cys-80-Cys-94, and Cys-85-Cys-99. A propeptide spanning residues 103–105 (SLA) is cleaved from the precursor.

In terms of processing, this is a cyclic peptide.

Functionally, probably participates in a plant defense mechanism. The protein is Cyclotide vibi-J of Viola biflora (Yellow wood violet).